Reading from the N-terminus, the 202-residue chain is Small ribosomal subunit protein uS2 (202 aa).

The protein belongs to the universal ribosomal protein uS2 family.

The polypeptide is Small ribosomal subunit protein uS2 (rps2) (Pyrococcus abyssi (strain GE5 / Orsay)).